A 934-amino-acid chain; its full sequence is Aconitate hydratase A (934 aa).

The interval 398 to 454 is disordered; it reads EPVDESLPAKRMDSEGAVQKEGEDVAGYNSSRAGHGESAAEGAAGRQSNPVVVSSPN. Residues 404–420 show a composition bias toward basic and acidic residues; sequence LPAKRMDSEGAVQKEGE. Positions 427 to 445 are enriched in low complexity; it reads SSRAGHGESAAEGAAGRQS. Cys473, Cys539, and Cys542 together coordinate [4Fe-4S] cluster.

The protein belongs to the aconitase/IPM isomerase family. In terms of assembly, monomer. It depends on [4Fe-4S] cluster as a cofactor.

The enzyme catalyses citrate = D-threo-isocitrate. It catalyses the reaction (2S,3R)-3-hydroxybutane-1,2,3-tricarboxylate = 2-methyl-cis-aconitate + H2O. It participates in carbohydrate metabolism; tricarboxylic acid cycle; isocitrate from oxaloacetate: step 2/2. It functions in the pathway organic acid metabolism; propanoate degradation. Its function is as follows. Involved in the catabolism of short chain fatty acids (SCFA) via the tricarboxylic acid (TCA)(acetyl degradation route) and probably via the 2-methylcitrate cycle I (propionate degradation route). Catalyzes the reversible isomerization of citrate to isocitrate via cis-aconitate. Could catalyze the hydration of 2-methyl-cis-aconitate to yield (2R,3S)-2-methylisocitrate. The apo form of AcnA functions as a RNA-binding regulatory protein. The protein is Aconitate hydratase A (acn) of Corynebacterium diphtheriae (strain ATCC 700971 / NCTC 13129 / Biotype gravis).